The primary structure comprises 165 residues: Chorismate pyruvate-lyase (165 aa).

Residues Met-35, Arg-77, Leu-115, and Glu-156 each contribute to the substrate site.

The protein belongs to the UbiC family. Monomer.

Its subcellular location is the cytoplasm. The enzyme catalyses chorismate = 4-hydroxybenzoate + pyruvate. The protein operates within cofactor biosynthesis; ubiquinone biosynthesis. Its function is as follows. Removes the pyruvyl group from chorismate, with concomitant aromatization of the ring, to provide 4-hydroxybenzoate (4HB) for the ubiquinone pathway. This Escherichia coli O157:H7 protein is Chorismate pyruvate-lyase.